The following is a 195-amino-acid chain: Thioredoxin reductase-like selenoprotein T (195 aa).

An N-terminal signal peptide occupies residues 1 to 19; it reads MRLLLLLLVAASAVVRSDA. A cross-link (cysteinyl-selenocysteine (Cys-Sec)) is located at residues 46–49; it reads CVSU. U49 is a non-standard amino acid (selenocysteine). Residues 85 to 103 traverse the membrane as a helical segment; sequence IASFLSVFKLVLIGLIIVG.

It belongs to the SelWTH family. Selenoprotein T subfamily. In terms of processing, may contain a selenide-sulfide bond between Cys-46 and Sec-49. This bond is speculated to serve as redox-active pair.

The protein localises to the endoplasmic reticulum membrane. It carries out the reaction [thioredoxin]-dithiol + NADP(+) = [thioredoxin]-disulfide + NADPH + H(+). Selenoprotein with thioredoxin reductase-like oxidoreductase activity. Protects dopaminergic neurons against oxidative stress and cell death. Involved in ADCYAP1/PACAP-induced calcium mobilization and neuroendocrine secretion. Plays a role in fibroblast anchorage and redox regulation. In gastric smooth muscle, modulates the contraction processes through the regulation of calcium release and MYLK activation. In pancreatic islets, involved in the control of glucose homeostasis, contributes to prolonged ADCYAP1/PACAP-induced insulin secretion. The chain is Thioredoxin reductase-like selenoprotein T from Bos taurus (Bovine).